The chain runs to 462 residues: ATP synthase subunit beta (462 aa).

151 to 158 (GGAGVGKT) contacts ATP.

The protein belongs to the ATPase alpha/beta chains family. As to quaternary structure, F-type ATPases have 2 components, CF(1) - the catalytic core - and CF(0) - the membrane proton channel. CF(1) has five subunits: alpha(3), beta(3), gamma(1), delta(1), epsilon(1). CF(0) has four main subunits: a(1), b(1), b'(1) and c(9-12).

It is found in the cell inner membrane. It carries out the reaction ATP + H2O + 4 H(+)(in) = ADP + phosphate + 5 H(+)(out). In terms of biological role, produces ATP from ADP in the presence of a proton gradient across the membrane. The catalytic sites are hosted primarily by the beta subunits. This is ATP synthase subunit beta from Chlorobium phaeobacteroides (strain BS1).